The chain runs to 191 residues: Lipoprotein signal peptidase (191 aa).

3 consecutive transmembrane segments (helical) span residues 26-46 (VWFP…LKAW), 84-104 (AVPL…YLLW), and 110-130 (FLTV…IDGL). Catalysis depends on residues Asp137 and Asp163. The chain crosses the membrane as a helical span at residues 156–176 (FPIFNIADMCVVGGTILLLVA).

Belongs to the peptidase A8 family.

The protein localises to the cell membrane. It catalyses the reaction Release of signal peptides from bacterial membrane prolipoproteins. Hydrolyzes -Xaa-Yaa-Zaa-|-(S,diacylglyceryl)Cys-, in which Xaa is hydrophobic (preferably Leu), and Yaa (Ala or Ser) and Zaa (Gly or Ala) have small, neutral side chains.. Its pathway is protein modification; lipoprotein biosynthesis (signal peptide cleavage). In terms of biological role, this protein specifically catalyzes the removal of signal peptides from prolipoproteins. This chain is Lipoprotein signal peptidase, found in Deinococcus radiodurans (strain ATCC 13939 / DSM 20539 / JCM 16871 / CCUG 27074 / LMG 4051 / NBRC 15346 / NCIMB 9279 / VKM B-1422 / R1).